A 241-amino-acid polypeptide reads, in one-letter code: tRNA pseudouridine synthase B (241 aa).

D45 (nucleophile) is an active-site residue.

It belongs to the pseudouridine synthase TruB family. Type 1 subfamily.

The enzyme catalyses uridine(55) in tRNA = pseudouridine(55) in tRNA. Functionally, responsible for synthesis of pseudouridine from uracil-55 in the psi GC loop of transfer RNAs. This is tRNA pseudouridine synthase B from Chlamydia muridarum (strain MoPn / Nigg).